Reading from the N-terminus, the 435-residue chain is Tol-Pal system protein TolB (435 aa).

An N-terminal signal peptide occupies residues 1 to 28 (MVKCSLIRALMVIAGLIGAAAFTTPANA). The tract at residues 288–310 (STAAIDTSPSYSPDGARVSFESD) is disordered.

It belongs to the TolB family. As to quaternary structure, the Tol-Pal system is composed of five core proteins: the inner membrane proteins TolA, TolQ and TolR, the periplasmic protein TolB and the outer membrane protein Pal. They form a network linking the inner and outer membranes and the peptidoglycan layer.

It is found in the periplasm. In terms of biological role, part of the Tol-Pal system, which plays a role in outer membrane invagination during cell division and is important for maintaining outer membrane integrity. The protein is Tol-Pal system protein TolB of Rhizobium leguminosarum bv. trifolii (strain WSM2304).